The following is a 314-amino-acid chain: Homoserine kinase (314 aa).

97–107 provides a ligand contact to ATP; the sequence is PPARGMGSSAT.

Belongs to the GHMP kinase family. Homoserine kinase subfamily.

It localises to the cytoplasm. It carries out the reaction L-homoserine + ATP = O-phospho-L-homoserine + ADP + H(+). It functions in the pathway amino-acid biosynthesis; L-threonine biosynthesis; L-threonine from L-aspartate: step 4/5. Its function is as follows. Catalyzes the ATP-dependent phosphorylation of L-homoserine to L-homoserine phosphate. The chain is Homoserine kinase from Synechococcus sp. (strain RCC307).